A 167-amino-acid polypeptide reads, in one-letter code: Ureidoglycolate lyase (167 aa).

This sequence belongs to the ureidoglycolate lyase family. As to quaternary structure, homodimer. It depends on Ni(2+) as a cofactor.

The enzyme catalyses (S)-ureidoglycolate = urea + glyoxylate. Its pathway is nitrogen metabolism; (S)-allantoin degradation. Functionally, catalyzes the catabolism of the allantoin degradation intermediate (S)-ureidoglycolate, generating urea and glyoxylate. Involved in the utilization of allantoin as nitrogen source. The chain is Ureidoglycolate lyase from Pseudomonas fluorescens (strain SBW25).